The primary structure comprises 338 residues: Lumican (338 aa).

An N-terminal signal peptide occupies residues 1 to 18 (MNVCTFTLVLALVGSVSG). Gln-19 carries the post-translational modification Pyrrolidone carboxylic acid. 4 positions are modified to sulfotyrosine: Tyr-20, Tyr-21, Tyr-23, and Tyr-30. In terms of domain architecture, LRRNT spans 28–66 (FMYGELSPNCAPECNCPHSYPTAMYCDDLKLKSVPMVPP). LRR repeat units follow at residues 67-88 (GIKY…AFEN), 91-114 (DLQW…VFSK), 117-137 (QLKK…PLPK), 138-159 (SLQD…DGLV), 160-181 (NLTF…ASLK), 185-205 (SLEY…GLPT), 206-227 (SLLT…YFNR), and 230-250 (GLQY…PGNS). N-linked (GlcNAc...) (keratan sulfate) asparagine glycosylation is present at Asn-88. The N-linked (GlcNAc...) (keratan sulfate) asparagine glycan is linked to Asn-127. A glycan (N-linked (GlcNAc...) (keratan sulfate) asparagine) is linked at Asn-160. The N-linked (GlcNAc...) (keratan sulfate) asparagine glycan is linked to Asn-252. LRR repeat units lie at residues 255–276 (SLLE…NENL) and 277–296 (ENYY…SFCK). Cys-295 and Cys-328 are oxidised to a cystine. Residue Ser-304 is modified to Phosphoserine. The stretch at 305–326 (KIKHLRLDGNPLTQSSLPPDMY) is one LRR 11 repeat.

This sequence belongs to the small leucine-rich proteoglycan (SLRP) family. SLRP class II subfamily. As to quaternary structure, binds to laminin. Contains keratan sulfate.

It is found in the secreted. Its subcellular location is the extracellular space. It localises to the extracellular matrix. The chain is Lumican (Lum) from Rattus norvegicus (Rat).